Here is a 712-residue protein sequence, read N- to C-terminus: Probable metal-nicotianamine transporter YSL11 (712 aa).

Residues 25–48 (RRNTTAAARGNAGEEEEEAEAVAP) form a disordered region. 14 consecutive transmembrane segments (helical) span residues 70–90 (AFVV…KLSL), 93–113 (GVIP…VRLW), 138–158 (CVVS…LFGM), 180–200 (LGWI…ALVP), 242–262 (LGKY…YTAG), 300–320 (IVNV…WPLI), 345–365 (VFIT…KVFG), 418–438 (VAIG…PLII), 446–466 (ILIA…GSGL), 478–498 (LAIF…LVGL), 532–552 (FVSQ…VFWL), 593–613 (LTLC…KDLV), 631–651 (FYLG…LYFW), and 666–686 (VASG…VLSL).

It belongs to the YSL (TC 2.A.67.2) family.

It is found in the membrane. Functionally, may be involved in the transport of nicotianamine-chelated metals. This is Probable metal-nicotianamine transporter YSL11 (YSL11) from Oryza sativa subsp. japonica (Rice).